The chain runs to 142 residues: Glycine-rich RNA-binding protein 1 (142 aa).

The RRM domain maps to 1 to 65 (NSLHSAFSTY…RNITVNEAQS (65 aa)). The tract at residues 48–101 (MNGKELDGRNITVNEAQSRGGRGGGGGGGYGGGRGGGGGYGRRDGGGGGYGGGG) is disordered. The span at 67 to 101 (GGRGGGGGGGYGGGRGGGGGYGRRDGGGGGYGGGG) shows a compositional bias: gly residues.

Functionally, possibly has a role in RNA transcription or processing during stress. The polypeptide is Glycine-rich RNA-binding protein 1 (GRP1) (Sorghum bicolor (Sorghum)).